Consider the following 359-residue polypeptide: MALVPLRLLLDHAAENGYGIPAFNVNNLEQIQAILKAAAETDSPVILQASRGARNYAGENFLRHLILAAVETYPEIPIVMHQDHGNAPSTCYSAIKNNFTSVMMDGSLEADAKTPASFEYNVNVTREVVNVAHALGVSVEGELGCLGSLETGAGEAEDGHGFEGTLDHSQLLTDPDEAVNFVEATQVDALAVAIGTSHGAYKFTRKPTGEILAISRIEEIHRRLPNTHLVMHGSSSVPEDLIALINEYGGAIPETYGVPVEEIQKGIKSGVRKVNIDTDNRLAITAAVREALAKNPKEFDPRHFLKPSITYMQKVCAERYVQFGTAGNASKIKQVSLETFAAKYAKGELNAISKAAAKV.

D-glyceraldehyde 3-phosphate is bound at residue Ser50. Catalysis depends on Asp83, which acts as the Proton donor. The Zn(2+) site is built by His84, Asp105, Glu142, and His198. Residue Gly199 coordinates dihydroxyacetone phosphate. His232 contributes to the Zn(2+) binding site. Dihydroxyacetone phosphate contacts are provided by residues 233-235 (GSS) and 275-278 (NIDT).

The cofactor is Zn(2+).

It carries out the reaction beta-D-fructose 1,6-bisphosphate = D-glyceraldehyde 3-phosphate + dihydroxyacetone phosphate. It participates in carbohydrate degradation; glycolysis; D-glyceraldehyde 3-phosphate and glycerone phosphate from D-glucose: step 4/4. Catalyzes the aldol condensation of dihydroxyacetone phosphate (DHAP or glycerone-phosphate) with glyceraldehyde 3-phosphate (G3P) to form fructose 1,6-bisphosphate (FBP) in gluconeogenesis and the reverse reaction in glycolysis. The sequence is that of Fructose-bisphosphate aldolase from Nostoc sp. (strain PCC 7120 / SAG 25.82 / UTEX 2576).